The sequence spans 67 residues: Protein SlyX homolog (67 aa).

It belongs to the SlyX family.

The chain is Protein SlyX homolog from Mesorhizobium japonicum (strain LMG 29417 / CECT 9101 / MAFF 303099) (Mesorhizobium loti (strain MAFF 303099)).